Here is a 397-residue protein sequence, read N- to C-terminus: Flavohemoprotein (397 aa).

Residues 4 to 140 (SFSPHTITLI…IANLLKDREA (137 aa)) enclose the Globin domain. Histidine 87 contributes to the heme b binding site. Active-site charge relay system residues include tyrosine 97 and glutamate 139. Residues 151-397 (GGWIHWRRFV…FGPMDEEMAA (247 aa)) are reductase. The region spanning 154–258 (IHWRRFVISK…TPPVGDFFLP (105 aa)) is the FAD-binding FR-type domain. FAD contacts are provided by residues tyrosine 192 and 207 to 210 (RNYS). An NADP(+)-binding site is contributed by 271 to 276 (GVGLTP). 387-390 (FFGP) contributes to the FAD binding site.

This sequence belongs to the globin family. Two-domain flavohemoproteins subfamily. In the C-terminal section; belongs to the flavoprotein pyridine nucleotide cytochrome reductase family. Heme b is required as a cofactor. Requires FAD as cofactor.

The enzyme catalyses 2 nitric oxide + NADPH + 2 O2 = 2 nitrate + NADP(+) + H(+). It catalyses the reaction 2 nitric oxide + NADH + 2 O2 = 2 nitrate + NAD(+) + H(+). Functionally, is involved in NO detoxification in an aerobic process, termed nitric oxide dioxygenase (NOD) reaction that utilizes O(2) and NAD(P)H to convert NO to nitrate, which protects the bacterium from various noxious nitrogen compounds. Therefore, plays a central role in the inducible response to nitrosative stress. In Xylella fastidiosa (strain 9a5c), this protein is Flavohemoprotein.